Reading from the N-terminus, the 551-residue chain is Protein ROOT HAIR SPECIFIC 17 (551 aa).

A helical; Signal-anchor for type II membrane protein transmembrane segment spans residues 39 to 59; sequence LFPLVSAVSGCLLLILFSFST. 2 N-linked (GlcNAc...) asparagine glycosylation sites follow: Asn-109 and Asn-153. 293–295 provides a ligand contact to substrate; that stretch reads HLR. Residues Asn-405 and Asn-465 are each glycosylated (N-linked (GlcNAc...) asparagine). The segment at 515 to 539 is disordered; the sequence is KAKHVNEDDSSEYSEIGNVPISSRS.

It belongs to the glycosyltransferase GT106 family. As to expression, specifically expressed in the root hair.

It is found in the membrane. It participates in glycan metabolism. This Arabidopsis thaliana (Mouse-ear cress) protein is Protein ROOT HAIR SPECIFIC 17.